The following is a 177-amino-acid chain: Large ribosomal subunit protein uL6 (177 aa).

The protein belongs to the universal ribosomal protein uL6 family. In terms of assembly, part of the 50S ribosomal subunit.

Its function is as follows. This protein binds to the 23S rRNA, and is important in its secondary structure. It is located near the subunit interface in the base of the L7/L12 stalk, and near the tRNA binding site of the peptidyltransferase center. The sequence is that of Large ribosomal subunit protein uL6 from Rickettsia conorii (strain ATCC VR-613 / Malish 7).